A 372-amino-acid polypeptide reads, in one-letter code: NAD(P)H-quinone oxidoreductase subunit 1 (372 aa).

8 helical membrane passes run 29–49, 97–117, 128–148, 176–196, 204–224, 254–274, 308–328, and 351–371; these read WLPFPMLLMIVVATVGVLVTV, LLFTLGPVIVAVPVFLSYLVV, LGVAIFLWIALSSIQPIGLLM, LALAVLAVAMMSNSLSTIDIV, ILGWNIWRQPLGFIIFWIAVL, FALYYLASYVNLVLSSLLVAV, TLGIIMTLLKTYLLVFIAVLL, and VALVNLLLTAALKLTFPFAFG.

This sequence belongs to the complex I subunit 1 family. As to quaternary structure, NDH-1 is composed of at least 11 different subunits.

It localises to the cellular thylakoid membrane. It catalyses the reaction a plastoquinone + NADH + (n+1) H(+)(in) = a plastoquinol + NAD(+) + n H(+)(out). The enzyme catalyses a plastoquinone + NADPH + (n+1) H(+)(in) = a plastoquinol + NADP(+) + n H(+)(out). Functionally, NDH-1 shuttles electrons from an unknown electron donor, via FMN and iron-sulfur (Fe-S) centers, to quinones in the respiratory and/or the photosynthetic chain. The immediate electron acceptor for the enzyme in this species is believed to be plastoquinone. Couples the redox reaction to proton translocation, and thus conserves the redox energy in a proton gradient. This is NAD(P)H-quinone oxidoreductase subunit 1 from Trichodesmium erythraeum (strain IMS101).